Here is a 272-residue protein sequence, read N- to C-terminus: Undecaprenyl-diphosphatase (272 aa).

7 consecutive transmembrane segments (helical) span residues 22-42 (FLPV…GFTG), 45-65 (AETF…VVFW), 92-112 (SHII…HDVI), 118-138 (PQSV…AEIL), 189-209 (YTAS…ASGL), 228-248 (VGFV…LALI), and 251-271 (ISFI…YWVF).

This sequence belongs to the UppP family.

It is found in the cell inner membrane. The catalysed reaction is di-trans,octa-cis-undecaprenyl diphosphate + H2O = di-trans,octa-cis-undecaprenyl phosphate + phosphate + H(+). Catalyzes the dephosphorylation of undecaprenyl diphosphate (UPP). Confers resistance to bacitracin. This Photorhabdus laumondii subsp. laumondii (strain DSM 15139 / CIP 105565 / TT01) (Photorhabdus luminescens subsp. laumondii) protein is Undecaprenyl-diphosphatase.